The chain runs to 728 residues: NF-kappa-B inhibitor zeta (728 aa).

The disordered stretch occupies residues 45 to 107 (GAGDTGYLSA…PHMGVGRQQR (63 aa)). Over residues 53 to 82 (SAVPSAPGSPGSDSSDFSSTSSVSSCGAVE) the composition is skewed to low complexity. The span at 83 to 96 (SRPRGGARAERPQV) shows a compositional bias: basic and acidic residues. The 23-residue stretch at 107-129 (RGPFQGVRVKNSVKELLLHIRSN) folds into the OCA domain. The short motif at 163-178 (KRKGPDPLSDGPVCKR) is the Nuclear localization signal element. 2 stretches are compositionally biased toward polar residues: residues 241 to 250 (PTVPQNSPRD) and 268 to 288 (QPFQ…YQYS). The disordered stretch occupies residues 241-334 (PTVPQNSPRD…SQSPKYDSNL (94 aa)). Low complexity predominate over residues 303-315 (QQQHQQNYPHNSP). The span at 316–330 (LQFSPYSRMSQSPKY) shows a compositional bias: polar residues. Residues 329–403 (KYDSNLFDTH…VGVHDVGSHS (75 aa)) form a required for transcriptional activity region. The interaction with NFKB1/p50 stretch occupies residues 414–728 (MGSPMNTTQL…KSIQQRAPPY (315 aa)). ANK repeat units lie at residues 453–482 (DGDT…ALHM), 489–518 (NGQS…QVNT), 522–551 (WGRT…RSNQ), 561–589 (DGLT…SHSP), 591–617 (VQDL…AVEA), 622–651 (SGRT…CLSF), and 658–691 (NGNT…DPST).

Interacts with NFKB1/p50. Interacts with RELA. Interacts with AKIRIN2. As to expression, expressed in kidney, liver, lung and heart. Expressed at very low levels in skeletal muscle, spleen and brain.

It localises to the nucleus. Involved in regulation of NF-kappa-B transcription factor complexes. Inhibits NF-kappa-B activity without affecting its nuclear translocation upon stimulation. Inhibits DNA-binding of RELA and NFKB1/p50, and of the NF-kappa-B p65-p50 heterodimer and the NF-kappa-B p50-p50 homodimer. Also seems to activate NF-kappa-B-mediated transcription. In vitro, upon association with NFKB1/p50 has transcriptional activation activity and, together with NFKB1/p50 and RELA, is recruited to LCN2 promoters. Promotes transcription of LCN2 and DEFB4. Is recruited to IL-6 promoters and activates IL-6 but decreases TNF-alpha production in response to LPS. Seems to be involved in the induction of inflammatory genes activated through TLR/IL-1 receptor signaling. Involved in the induction of T helper 17 cells (Th17) differentiation upon recognition of antigen by T cell antigen receptor (TCR). The polypeptide is NF-kappa-B inhibitor zeta (Nfkbiz) (Mus musculus (Mouse)).